Consider the following 579-residue polypeptide: Pre-mRNA-processing factor 17 (579 aa).

Low complexity predominate over residues 1–19 (MSAAIAALAASYGSGSGSE). 2 disordered regions span residues 1 to 34 (MSAAIAALAASYGSGSGSESDSDSEGSRCPLPAA) and 204 to 237 (DVAKPSEEEQKELDEITAKRQKKGKQEEEKPGEE). 7 WD repeats span residues 286 to 326 (GHTK…RCLR), 330 to 369 (GHSKAVRDICFNTAGTQFLSAAYDRYLKLWDTETGQCISR), 371 to 413 (TNRK…IVQE), 416 to 455 (RHLGAVNTIVFVDENRRFVSTSDDKSLRVWEWDIPVDFKY), 459 to 498 (PSMHSMPAVTLSPNGKWLACQSMDNQILIFGAQNRFRLNK), 504 to 545 (GHMV…LYSR), and 548 to 578 (AHDKVCIGAVWHPHETSKVITCGWDGLIKLW).

In terms of assembly, component of the catalytic spliceosome C complexes. Component of the postcatalytic spliceosome P complex. Interacts with PPIL1; this interaction leads to CDC40 isomerization. Undergoes isomerization of the peptide bond between Gly-94 and Pro-95. The reaction is catalyzed by PPIL1.

Its subcellular location is the nucleus. The protein resides in the nucleus speckle. Required for pre-mRNA splicing as component of the activated spliceosome. Plays an important role in embryonic brain development; this function does not require proline peptide bond isomerization. The chain is Pre-mRNA-processing factor 17 (Cdc40) from Mus musculus (Mouse).